The primary structure comprises 210 residues: Proteasome subunit beta (210 aa).

The propeptide at 1 to 9 (MDNDKYLKG) is removed in mature form; by autocatalysis. The Nucleophile role is filled by threonine 10.

The protein belongs to the peptidase T1B family. In terms of assembly, the 20S proteasome core is composed of 14 alpha and 14 beta subunits that assemble into four stacked heptameric rings, resulting in a barrel-shaped structure. The two inner rings, each composed of seven catalytic beta subunits, are sandwiched by two outer rings, each composed of seven alpha subunits. The catalytic chamber with the active sites is on the inside of the barrel. Has a gated structure, the ends of the cylinder being occluded by the N-termini of the alpha-subunits. Is capped at one or both ends by the proteasome regulatory ATPase, PAN.

The protein localises to the cytoplasm. It catalyses the reaction Cleavage of peptide bonds with very broad specificity.. Its activity is regulated as follows. The formation of the proteasomal ATPase PAN-20S proteasome complex, via the docking of the C-termini of PAN into the intersubunit pockets in the alpha-rings, triggers opening of the gate for substrate entry. Interconversion between the open-gate and close-gate conformations leads to a dynamic regulation of the 20S proteasome proteolysis activity. Functionally, component of the proteasome core, a large protease complex with broad specificity involved in protein degradation. The protein is Proteasome subunit beta of Methanosarcina thermophila.